The primary structure comprises 641 residues: Chaperone protein HtpG (641 aa).

Residues 1–348 (MTTATEKQTL…SNDLSLNVSR (348 aa)) are a; substrate-binding. The b stretch occupies residues 349–565 (EILQNDKAVE…AYDMGVQMRR (217 aa)). A c region spans residues 566-641 (IMEAAGQALP…KLLLELSNAG (76 aa)).

It belongs to the heat shock protein 90 family. In terms of assembly, homodimer.

The protein localises to the cytoplasm. Its function is as follows. Molecular chaperone. Has ATPase activity. This is Chaperone protein HtpG from Hahella chejuensis (strain KCTC 2396).